Consider the following 386-residue polypeptide: Branched-chain-amino-acid aminotransferase, cytosolic (386 aa).

Residue M1 is modified to N-acetylmethionine. Position 222 is an N6-(pyridoxal phosphate)lysine (K222).

It belongs to the class-IV pyridoxal-phosphate-dependent aminotransferase family. As to quaternary structure, homodimer. It depends on pyridoxal 5'-phosphate as a cofactor. As to expression, expressed in brain and kidney. Overexpressed in MYC-induced brain tumors, lymphomas, as well as in a teratocarcinoma cell line.

The protein localises to the cytoplasm. The enzyme catalyses L-leucine + 2-oxoglutarate = 4-methyl-2-oxopentanoate + L-glutamate. The catalysed reaction is L-isoleucine + 2-oxoglutarate = (S)-3-methyl-2-oxopentanoate + L-glutamate. It catalyses the reaction L-valine + 2-oxoglutarate = 3-methyl-2-oxobutanoate + L-glutamate. Its function is as follows. Catalyzes the first reaction in the catabolism of the essential branched chain amino acids leucine, isoleucine, and valine. In Mus musculus (Mouse), this protein is Branched-chain-amino-acid aminotransferase, cytosolic (Bcat1).